The primary structure comprises 363 residues: NAD(P)H-quinone oxidoreductase subunit 1, chloroplastic (363 aa).

A run of 6 helical transmembrane segments spans residues 30-50, 98-118, 129-149, 248-268, 300-320, and 336-356; these read LVPI…IVWL, FSIG…IIPF, IGVF…LMSG, YSGI…LVSS, VFGT…FLFI, and LLNL…LLTT.

Belongs to the complex I subunit 1 family. As to quaternary structure, NDH is composed of at least 16 different subunits, 5 of which are encoded in the nucleus.

Its subcellular location is the plastid. It localises to the chloroplast thylakoid membrane. It catalyses the reaction a plastoquinone + NADH + (n+1) H(+)(in) = a plastoquinol + NAD(+) + n H(+)(out). The enzyme catalyses a plastoquinone + NADPH + (n+1) H(+)(in) = a plastoquinol + NADP(+) + n H(+)(out). NDH shuttles electrons from NAD(P)H:plastoquinone, via FMN and iron-sulfur (Fe-S) centers, to quinones in the photosynthetic chain and possibly in a chloroplast respiratory chain. The immediate electron acceptor for the enzyme in this species is believed to be plastoquinone. Couples the redox reaction to proton translocation, and thus conserves the redox energy in a proton gradient. This chain is NAD(P)H-quinone oxidoreductase subunit 1, chloroplastic, found in Vitis vinifera (Grape).